Reading from the N-terminus, the 130-residue chain is Small ribosomal subunit protein uS9 (130 aa).

It belongs to the universal ribosomal protein uS9 family.

The polypeptide is Small ribosomal subunit protein uS9 (Cupriavidus necator (strain ATCC 17699 / DSM 428 / KCTC 22496 / NCIMB 10442 / H16 / Stanier 337) (Ralstonia eutropha)).